The chain runs to 163 residues: Shikimate kinase (163 aa).

10–15 (GVGKTT) serves as a coordination point for ATP. Threonine 14 contributes to the Mg(2+) binding site. Substrate is bound by residues aspartate 28, arginine 52, and glycine 75. An ATP-binding site is contributed by arginine 116. Substrate is bound at residue arginine 134. Arginine 151 contributes to the ATP binding site.

Belongs to the shikimate kinase family. As to quaternary structure, monomer. The cofactor is Mg(2+).

The protein localises to the cytoplasm. The catalysed reaction is shikimate + ATP = 3-phosphoshikimate + ADP + H(+). It functions in the pathway metabolic intermediate biosynthesis; chorismate biosynthesis; chorismate from D-erythrose 4-phosphate and phosphoenolpyruvate: step 5/7. Functionally, catalyzes the specific phosphorylation of the 3-hydroxyl group of shikimic acid using ATP as a cosubstrate. This Streptococcus pyogenes serotype M4 (strain MGAS10750) protein is Shikimate kinase.